A 279-amino-acid chain; its full sequence is Tryptophan synthase alpha chain (279 aa).

Residues Glu-50 and Asp-61 each act as proton acceptor in the active site.

The protein belongs to the TrpA family. Tetramer of two alpha and two beta chains.

The enzyme catalyses (1S,2R)-1-C-(indol-3-yl)glycerol 3-phosphate + L-serine = D-glyceraldehyde 3-phosphate + L-tryptophan + H2O. Its pathway is amino-acid biosynthesis; L-tryptophan biosynthesis; L-tryptophan from chorismate: step 5/5. Its function is as follows. The alpha subunit is responsible for the aldol cleavage of indoleglycerol phosphate to indole and glyceraldehyde 3-phosphate. This chain is Tryptophan synthase alpha chain, found in Brucella abortus (strain S19).